The sequence spans 723 residues: Threonine--tRNA ligase, mitochondrial (723 aa).

At S57 the chain carries Phosphoserine. The TGS domain maps to R64 to T126.

This sequence belongs to the class-II aminoacyl-tRNA synthetase family. In terms of assembly, homodimer.

It localises to the mitochondrion matrix. The enzyme catalyses tRNA(Thr) + L-threonine + ATP = L-threonyl-tRNA(Thr) + AMP + diphosphate + H(+). Catalyzes the attachment of threonine to tRNA(Thr) in a two-step reaction: threonine is first activated by ATP to form Thr-AMP and then transferred to the acceptor end of tRNA(Thr). Also edits incorrectly charged tRNA(Thr) via its editing domain. This chain is Threonine--tRNA ligase, mitochondrial (Tars2), found in Mus musculus (Mouse).